The chain runs to 553 residues: Glycine betaine/proline/choline transporter VP1723 (553 aa).

12 consecutive transmembrane segments (helical) span residues Asn-43–Phe-63, Phe-85–Leu-105, Ala-122–Val-142, Trp-191–Phe-211, Val-231–Leu-251, Thr-278–Leu-298, Met-310–Leu-330, Trp-362–Ala-382, Phe-393–Gly-413, Val-443–Ile-463, Val-490–Ala-510, and Met-515–Ile-535.

It belongs to the BCCT transporter (TC 2.A.15) family.

The protein localises to the cell inner membrane. Involved in the uptake of osmoprotectants. Can transport glycine betaine, proline and choline. The protein is Glycine betaine/proline/choline transporter VP1723 of Vibrio parahaemolyticus serotype O3:K6 (strain RIMD 2210633).